A 121-amino-acid polypeptide reads, in one-letter code: Large ribosomal subunit protein bL12 (121 aa).

The protein belongs to the bacterial ribosomal protein bL12 family. Homodimer. Part of the ribosomal stalk of the 50S ribosomal subunit. Forms a multimeric L10(L12)X complex, where L10 forms an elongated spine to which 2 to 4 L12 dimers bind in a sequential fashion. Binds GTP-bound translation factors.

Functionally, forms part of the ribosomal stalk which helps the ribosome interact with GTP-bound translation factors. Is thus essential for accurate translation. This chain is Large ribosomal subunit protein bL12, found in Shewanella halifaxensis (strain HAW-EB4).